Here is a 657-residue protein sequence, read N- to C-terminus: Receptor-type tyrosine-protein phosphatase R (657 aa).

The N-terminal stretch at 1–21 (MRRAVCFPALCLLLNLHAAGC) is a signal peptide. Residues 22 to 227 (FSGNNDHFLA…EADKIWSKEG (206 aa)) lie on the Extracellular side of the membrane. Ser23 is a glycosylation site (O-linked (Xyl...) (chondroitin sulfate) serine). The N-linked (GlcNAc...) asparagine glycan is linked to Asn129. Residues 228–248 (FYAVVIFLSIFVIIVTCLMIL) traverse the membrane as a helical segment. Residues 249–657 (YRLKERFQLS…ESRLSAETVQ (409 aa)) are Cytoplasmic-facing. Ser272 is modified (phosphoserine). Ser339 carries the phosphoserine; by PKA modification. A Tyrosine-protein phosphatase domain is found at 393–647 (LQSEFMEIPM…EFVHHALCLY (255 aa)). Residues Asp554, 588-594 (CSAGIGR), and Gln632 contribute to the substrate site. Cys588 acts as the Phosphocysteine intermediate in catalysis.

Belongs to the protein-tyrosine phosphatase family. Receptor class 7 subfamily. In terms of assembly, interacts with MAPKs. In terms of tissue distribution, detected in cerebrospinal fluid (at protein level). Expressed in brain, placenta, small intestine, stomach, uterus and weakly in the prostate. Isoform alpha has been observed only in the brain. Isoform gamma is expressed in brain, placenta and uterus. Isoform delta is expressed in brain, kidney, placenta, prostate, small intestine and uterus.

Its subcellular location is the secreted. It is found in the cell membrane. The protein localises to the cytoplasm. It localises to the perinuclear region. It catalyses the reaction O-phospho-L-tyrosyl-[protein] + H2O = L-tyrosyl-[protein] + phosphate. Sequesters mitogen-activated protein kinases (MAPKs) such as MAPK1, MAPK3 and MAPK14 in the cytoplasm in an inactive form. The MAPKs bind to a dephosphorylated kinase interacting motif, phosphorylation of which by the protein kinase A complex releases the MAPKs for activation and translocation into the nucleus. This chain is Receptor-type tyrosine-protein phosphatase R (PTPRR), found in Homo sapiens (Human).